Reading from the N-terminus, the 399-residue chain is Immunoglobulin heavy constant gamma 1 (399 aa).

The tract at residues 1–21 (ASTKGPSVFPLAPSSKSTSGG) is disordered. The interval 1 to 98 (ASTKGPSVFP…PSNTKVDKKV (98 aa)) is CH1. At 1–350 (ASTKGPSVFP…DGELDGLWTT (350 aa)) the chain is on the extracellular side. Ig-like domains lie at 6-99 (PSVF…KKVE), 121-220 (PSVF…KTIS), and 229-325 (PQVY…KSLS). The cysteines at positions 27 and 83 are disulfide-linked. Residues 99 to 110 (EPKSCDKTHTCP) form a hinge region. The segment at 111 to 223 (PCPAPELLGG…PIEKTISKAK (113 aa)) is CH2. 2 cysteine pairs are disulfide-bonded: C144–C204 and C250–C308. Residue N180 is glycosylated (N-linked (GlcNAc...) (complex) asparagine). The tract at residues 224 to 330 (GQPREPQVYT…QKSLSLSPEL (107 aa)) is CH3. The chain crosses the membrane as a helical span at residues 351-371 (ITIFITLFLLSVCYSATVTFF). Residues 372-399 (KVKWIFSSVVDLKQTIIPDYRNMIGQGA) are Cytoplasmic-facing.

In terms of assembly, immunoglobulins are composed of two identical heavy chains and two identical light chains; disulfide-linked. Interacts with FCGR1A; this interaction mediates IgG effector functions on monocytes. Interacts with FCGR2A and FCGR3A. In terms of processing, glycosylation on Asn-180 is required for interaction with Fc receptors and ability to activate the complement pathway. (Microbial infection) Deglycosylation on Asn-180 by S.pyogenes EndoS or Endos2 endoglucosidases prevents interaction between immunoglobulin-gamma (IgG) and Fc receptors, impairing ability to activate the complement pathway.

It is found in the secreted. The protein localises to the cell membrane. Functionally, constant region of immunoglobulin heavy chains. Immunoglobulins, also known as antibodies, are membrane-bound or secreted glycoproteins produced by B lymphocytes. In the recognition phase of humoral immunity, the membrane-bound immunoglobulins serve as receptors which, upon binding of a specific antigen, trigger the clonal expansion and differentiation of B lymphocytes into immunoglobulins-secreting plasma cells. Secreted immunoglobulins mediate the effector phase of humoral immunity, which results in the elimination of bound antigens. The antigen binding site is formed by the variable domain of one heavy chain, together with that of its associated light chain. Thus, each immunoglobulin has two antigen binding sites with remarkable affinity for a particular antigen. The variable domains are assembled by a process called V-(D)-J rearrangement and can then be subjected to somatic hypermutations which, after exposure to antigen and selection, allow affinity maturation for a particular antigen. Mediates IgG effector functions on monocytes triggering ADCC of virus-infected cells. The sequence is that of Immunoglobulin heavy constant gamma 1 from Homo sapiens (Human).